The following is a 337-amino-acid chain: Manganese-dependent ADP-ribose/CDP-alcohol diphosphatase (337 aa).

M1 is subject to N-acetylmethionine. D25, Q27, D74, N110, H241, H278, and H280 together coordinate Zn(2+).

This sequence belongs to the ADPRibase-Mn family. In terms of assembly, monomer. Requires Mg(2+) as cofactor.

It catalyses the reaction CDP-choline + H2O = phosphocholine + CMP + 2 H(+). The enzyme catalyses ADP-D-ribose + H2O = D-ribose 5-phosphate + AMP + 2 H(+). It carries out the reaction CDP-glycerol + H2O = sn-glycerol 3-phosphate + CMP + 2 H(+). Functionally, hydrolyzes ADP-ribose, IDP-ribose, CDP-glycerol, CDP-choline and CDP-ethanolamine, but not other non-reducing ADP-sugars or CDP-glucose. May be involved in immune cell signaling as suggested by the second-messenger role of ADP-ribose, which activates TRPM2 as a mediator of oxidative/nitrosative stress. This Bos taurus (Bovine) protein is Manganese-dependent ADP-ribose/CDP-alcohol diphosphatase (ADPRM).